Here is a 124-residue protein sequence, read N- to C-terminus: Small ribosomal subunit protein uS12 (124 aa).

D89 bears the 3-methylthioaspartic acid mark.

The protein belongs to the universal ribosomal protein uS12 family. As to quaternary structure, part of the 30S ribosomal subunit. Contacts proteins S8 and S17. May interact with IF1 in the 30S initiation complex.

Functionally, with S4 and S5 plays an important role in translational accuracy. Interacts with and stabilizes bases of the 16S rRNA that are involved in tRNA selection in the A site and with the mRNA backbone. Located at the interface of the 30S and 50S subunits, it traverses the body of the 30S subunit contacting proteins on the other side and probably holding the rRNA structure together. The combined cluster of proteins S8, S12 and S17 appears to hold together the shoulder and platform of the 30S subunit. This Sodalis glossinidius (strain morsitans) protein is Small ribosomal subunit protein uS12.